The sequence spans 249 residues: ATP synthase subunit a (249 aa).

The next 5 membrane-spanning stretches (helical) occupy residues 33–53 (GQVI…SIAA), 92–112 (LPFI…GALI), 131–151 (INTT…AGIS), 196–216 (LVVA…LMAL), and 217–237 (GLFT…AYIH).

The protein belongs to the ATPase A chain family. F-type ATPases have 2 components, CF(1) - the catalytic core - and CF(0) - the membrane proton channel. CF(1) has five subunits: alpha(3), beta(3), gamma(1), delta(1), epsilon(1). CF(0) has four main subunits: a, b, b' and c.

Its subcellular location is the cellular thylakoid membrane. Key component of the proton channel; it plays a direct role in the translocation of protons across the membrane. In Microcystis aeruginosa (strain NIES-843 / IAM M-2473), this protein is ATP synthase subunit a.